Here is a 225-residue protein sequence, read N- to C-terminus: Putative O-phosphotransferase MT2714 (225 aa).

An ATP-binding site is contributed by 30 to 37; sequence GGSSAGKT.

To S.violaceus chloramphenicol 3-O phosphotransferase.

In Mycobacterium tuberculosis (strain CDC 1551 / Oshkosh), this protein is Putative O-phosphotransferase MT2714.